A 341-amino-acid chain; its full sequence is Methionine import ATP-binding protein MetN 3 (341 aa).

The region spanning 2–241 (ILLENVKKIY…PQQDITKRFV (240 aa)) is the ABC transporter domain. 38–45 (GYSGAGKS) contributes to the ATP binding site.

Belongs to the ABC transporter superfamily. Methionine importer (TC 3.A.1.24) family. The complex is composed of two ATP-binding proteins (MetN), two transmembrane proteins (MetI) and a solute-binding protein (MetQ).

The protein resides in the cell membrane. The enzyme catalyses L-methionine(out) + ATP + H2O = L-methionine(in) + ADP + phosphate + H(+). It catalyses the reaction D-methionine(out) + ATP + H2O = D-methionine(in) + ADP + phosphate + H(+). In terms of biological role, part of the ABC transporter complex MetNIQ involved in methionine import. Responsible for energy coupling to the transport system. The sequence is that of Methionine import ATP-binding protein MetN 3 from Bacillus cereus (strain ATCC 10987 / NRS 248).